A 450-amino-acid polypeptide reads, in one-letter code: Glucose-6-phosphate isomerase (450 aa).

Glu-291 serves as the catalytic Proton donor. Catalysis depends on residues His-312 and Lys-426.

This sequence belongs to the GPI family.

The protein resides in the cytoplasm. It catalyses the reaction alpha-D-glucose 6-phosphate = beta-D-fructose 6-phosphate. It participates in carbohydrate biosynthesis; gluconeogenesis. Its pathway is carbohydrate degradation; glycolysis; D-glyceraldehyde 3-phosphate and glycerone phosphate from D-glucose: step 2/4. In terms of biological role, catalyzes the reversible isomerization of glucose-6-phosphate to fructose-6-phosphate. This chain is Glucose-6-phosphate isomerase, found in Clostridium novyi (strain NT).